Reading from the N-terminus, the 379-residue chain is Homoserine O-succinyltransferase (379 aa).

Residues 51–360 enclose the AB hydrolase-1 domain; the sequence is NAVLICHALS…DAPQGHDAFL (310 aa). Ser-157 acts as the Nucleophile in catalysis. Residue Arg-227 coordinates substrate. Active-site residues include Asp-323 and His-356. Asp-357 contacts substrate.

The protein belongs to the AB hydrolase superfamily. MetX family. Homodimer.

Its subcellular location is the cytoplasm. It catalyses the reaction L-homoserine + succinyl-CoA = O-succinyl-L-homoserine + CoA. It functions in the pathway amino-acid biosynthesis; L-methionine biosynthesis via de novo pathway; O-succinyl-L-homoserine from L-homoserine: step 1/1. Functionally, transfers a succinyl group from succinyl-CoA to L-homoserine, forming succinyl-L-homoserine. The protein is Homoserine O-succinyltransferase of Pseudomonas paraeruginosa (strain DSM 24068 / PA7) (Pseudomonas aeruginosa (strain PA7)).